The chain runs to 147 residues: Myoglobin (147 aa).

A Globin domain is found at 2–141 (ADFDAVLKCW…IIADLEANYK (140 aa)). His60 serves as a coordination point for nitrite. Position 60 (His60) interacts with O2. His89 serves as a coordination point for heme b.

The protein belongs to the globin family. Monomeric.

The protein localises to the cytoplasm. Its subcellular location is the sarcoplasm. It catalyses the reaction Fe(III)-heme b-[protein] + nitric oxide + H2O = Fe(II)-heme b-[protein] + nitrite + 2 H(+). It carries out the reaction H2O2 + AH2 = A + 2 H2O. Monomeric heme protein which primary function is to store oxygen and facilitate its diffusion within muscle tissues. Reversibly binds oxygen through a pentacoordinated heme iron and enables its timely and efficient release as needed during periods of heightened demand. Depending on the oxidative conditions of tissues and cells, and in addition to its ability to bind oxygen, it also has a nitrite reductase activity whereby it regulates the production of bioactive nitric oxide. Under stress conditions, like hypoxia and anoxia, it also protects cells against reactive oxygen species thanks to its pseudoperoxidase activity. The protein is Myoglobin (mb) of Thunnus obesus (Bigeye tuna).